The following is an 83-amino-acid chain: Hepcidin-2 (83 aa).

Positions 1-26 are cleaved as a signal peptide; the sequence is MALSTRTQAACLLLLLLASLSSTTYL. Positions 27-53 are excised as a propeptide; the sequence is QQQMRQTTELQPLHGEESRADIAIPMQ. 4 cysteine pairs are disulfide-bonded: Cys-65-Cys-81, Cys-68-Cys-71, Cys-69-Cys-77, and Cys-72-Cys-80.

Belongs to the hepcidin family. Highly expressed in the liver and to a much lesser extent in the heart. Also expressed in pancreas.

The protein localises to the secreted. Seems to act as a signaling molecule involved in the maintenance of iron homeostasis. In Mus musculus (Mouse), this protein is Hepcidin-2 (Hamp2).